A 276-amino-acid polypeptide reads, in one-letter code: Hydroxyethylthiazole kinase (276 aa).

Positions 126 and 172 each coordinate ATP. A substrate-binding site is contributed by Gly199.

This sequence belongs to the Thz kinase family. Requires Mg(2+) as cofactor.

The catalysed reaction is 5-(2-hydroxyethyl)-4-methylthiazole + ATP = 4-methyl-5-(2-phosphooxyethyl)-thiazole + ADP + H(+). The protein operates within cofactor biosynthesis; thiamine diphosphate biosynthesis; 4-methyl-5-(2-phosphoethyl)-thiazole from 5-(2-hydroxyethyl)-4-methylthiazole: step 1/1. Its function is as follows. Catalyzes the phosphorylation of the hydroxyl group of 4-methyl-5-beta-hydroxyethylthiazole (THZ). In Burkholderia pseudomallei (strain 1106a), this protein is Hydroxyethylthiazole kinase.